A 386-amino-acid polypeptide reads, in one-letter code: Probable pectin lyase F (386 aa).

The first 16 residues, 1 to 16 (MKTAVLSLLLALQAYA), serve as a signal peptide directing secretion. Cysteine 77 and cysteine 101 are disulfide-bonded. N-linked (GlcNAc...) asparagine glycosylation is present at asparagine 124. The active site involves arginine 251. A disulfide bridge links cysteine 326 with cysteine 334.

It belongs to the polysaccharide lyase 1 family.

The protein localises to the secreted. The enzyme catalyses Eliminative cleavage of (1-&gt;4)-alpha-D-galacturonan methyl ester to give oligosaccharides with 4-deoxy-6-O-methyl-alpha-D-galact-4-enuronosyl groups at their non-reducing ends.. Functionally, pectinolytic enzymes consist of four classes of enzymes: pectin lyase, polygalacturonase, pectin methylesterase and rhamnogalacturonase. Among pectinolytic enzymes, pectin lyase is the most important in depolymerization of pectin, since it cleaves internal glycosidic bonds of highly methylated pectins. This Neosartorya fischeri (strain ATCC 1020 / DSM 3700 / CBS 544.65 / FGSC A1164 / JCM 1740 / NRRL 181 / WB 181) (Aspergillus fischerianus) protein is Probable pectin lyase F (pelF).